A 163-amino-acid chain; its full sequence is MHTRAIYPGTFDPITNGHADLIERAAKLFKHVIIGIAANPSKQPRFTLEERVELVNRVTAHLDNVEVVGFSGLLVDFAKEQKASVLVRGLRAVSDFEYEFQLANMNRRLSPDLESVFLTPAEENSFISSTLVKEVALHGGDVNQFVHSEVATALAAKLKLAKP.

Thr10 lines the substrate pocket. ATP contacts are provided by residues Thr10–Phe11 and His18. Lys42, Leu74, and Arg88 together coordinate substrate. Residues Gly89–Arg91, Glu99, and Asn124–Thr130 contribute to the ATP site.

It belongs to the bacterial CoaD family. Homohexamer. Mg(2+) serves as cofactor.

It is found in the cytoplasm. The catalysed reaction is (R)-4'-phosphopantetheine + ATP + H(+) = 3'-dephospho-CoA + diphosphate. Its pathway is cofactor biosynthesis; coenzyme A biosynthesis; CoA from (R)-pantothenate: step 4/5. In terms of biological role, reversibly transfers an adenylyl group from ATP to 4'-phosphopantetheine, yielding dephospho-CoA (dPCoA) and pyrophosphate. This chain is Phosphopantetheine adenylyltransferase, found in Shewanella baltica (strain OS223).